Here is a 1042-residue protein sequence, read N- to C-terminus: Isoleucine--tRNA ligase (1042 aa).

Residues 48–58 (PFATGLPHFGH) carry the 'HIGH' region motif. Residues 594-598 (KMSKS) carry the 'KMSKS' region motif. Lys-597 is an ATP binding site.

The protein belongs to the class-I aminoacyl-tRNA synthetase family. IleS type 2 subfamily. As to quaternary structure, monomer. Zn(2+) serves as cofactor.

The protein localises to the cytoplasm. It catalyses the reaction tRNA(Ile) + L-isoleucine + ATP = L-isoleucyl-tRNA(Ile) + AMP + diphosphate. Catalyzes the attachment of isoleucine to tRNA(Ile). As IleRS can inadvertently accommodate and process structurally similar amino acids such as valine, to avoid such errors it has two additional distinct tRNA(Ile)-dependent editing activities. One activity is designated as 'pretransfer' editing and involves the hydrolysis of activated Val-AMP. The other activity is designated 'posttransfer' editing and involves deacylation of mischarged Val-tRNA(Ile). The protein is Isoleucine--tRNA ligase of Borrelia garinii subsp. bavariensis (strain ATCC BAA-2496 / DSM 23469 / PBi) (Borreliella bavariensis).